The following is a 1036-amino-acid chain: MGGPAAARTGAGGLRALLLALVAAGVPAGAYNLDAQRPVRFQGPSGSFFGYAVLEHFHDNTRWVLVGAPKADSKYSTSVKSPGAVFKCRVHTNPDRRCTELDMARGRTRGAPCGKTCRGDRDDEWMGVSLARQPRADGRVLACAHRWKNIYYEADHILPHGFCYLIPSNLQAKGKVLIPCYEEYKKKYGEEHGSCQAGIAGFFTEELVVMGAPGSFYWAGTLKVLNLTDNTYFKLNDEAIMNRRYTYLGYAVTAGHFSHPSITDVVGGAPQDEGIGKVYIFRADRRSGTLIKIFQASGKKMGSYFGSSLCAVDLNMDGLSDLLVGAPMFSEIRDEGQVTVYLNQGHGALEEQLTLTGDAAYNAHFGESIANLGDIDDDGFPDVAVGAPKEEDFAGAVYIYHGDANGIVPKYSMKLSGRRLNPTLRMFGQSISGGIDMDGNGYPDVTIGAFLSDSVVLLRARPVITVDVSIFLPGSINITAPQCHDGQQPVNCLNVTVCFRFHGKNVPGEIGLNYNLTADVAQKEKGQLPRVYFVLFGETAGQVSERLQLSHMDEVCHHYVAHVKRRVQDVISPIVFEAAYSLDEHVMGEEDRELPDLTPVLRWKKGQRISQKNQTVFERNCQSEDCAADLQLRGKLLLSSVDEKTPHLALGAVKNISLNISISNLGDDAYDANVSFNVSRELFFINMWQKEEMGISCELLESDFLKCSVGFPFMRSKSKYEFSVIFDTSHLSGEEEILSFIVTAQSGNLERSEALHDNTLTLTVPLVHEVDTSITGIVSPTSFVYGESVDASNFIQLDDQECHFQPVNITLQVYNMGPSTLPGSSVSISFPSRLSPGGAEMFQVQDMVVSQEKGNCSLQRNPTPCIIPQEQENIFHTIFAFFSKSGRKVLDCEKPGSFCLTLHCNLSALPKEESRTINLYMLLNTEILKKDSSSVIQFMARAKVKVEPALRVVEIANGNPEETLVVFEALHNLEPRGYVVGWIIAISLLVGILIFLLLAVLLWKMGFFRRRYKEIIEAEKNRKENEDGWDWVQKNQ.

The first 28 residues, Met1 to Ala28, serve as a signal peptide directing secretion. The Extracellular segment spans residues Gly29–Gly981. 7 FG-GAP repeats span residues Gln36–Arg97, Arg109–Lys175, Glu183–Phe233, Lys234–Leu290, Ile291–Glu350, Gln352–Pro409, and Ser412–Ser475. 3 cysteine pairs are disulfide-bonded: Cys88/Cys98, Cys143/Cys163, and Cys180/Cys195. A glycan (N-linked (GlcNAc...) asparagine) is linked at Asn226. The Ca(2+) site is built by Asp313, Asn315, Asp317, Asp321, Asp374, Asp376, Asp378, Asp382, Asp436, Asp438, Asn440, and Asp444. Cys483 and Cys492 form a disulfide bridge. Residues Asn494 and Asn515 are each glycosylated (N-linked (GlcNAc...) asparagine). 3 disulfides stabilise this stretch: Cys498–Cys556, Cys621–Cys626, and Cys697–Cys707. N-linked (GlcNAc...) asparagine glycosylation occurs at Asn808. Intrachain disulfides connect Cys856–Cys892 and Cys899–Cys904. A helical transmembrane segment spans residues Trp982–Leu1002. At Trp1003–Gln1036 the chain is on the cytoplasmic side. Residues Gly1006–Arg1010 carry the GFFKR motif motif.

This sequence belongs to the integrin alpha chain family. As to quaternary structure, heterodimer of an alpha and a beta subunit. Alpha-9 (ITGA9) associates with beta-1 (ITGB1). Integrin ITGA9:ITGB1 interacts with FBLN5 (via N-terminus). Integrin ITGA9:ITGB1 interacts with SPP1/OPN (via N-terminus). Integrin ITGA9:ITGB1 interacts with TNC/TNFN3 (via the 3rd Fibronectin type-III domain). Integrin ITGA9:ITGB1 interacts with SVEP1/polydom (via Sushi domain 21); thereby inhibits Ca(2+) intracellular signaling and as a result represses vasocontraction. Expressed in the media layer of the arterial wall (at protein level). Expressed in the airway epithelium, skeletal muscle, basal keratincytes, the basal epithelium of the cornea, hepatocytes, giant cells in the spleen and smooth muscle of the stomach, duodenum and veins (at protein level).

Its subcellular location is the membrane. In terms of biological role, integrin alpha-9/beta-1 (ITGA9:ITGB1) is a receptor for VCAM1, cytotactin and osteopontin. It recognizes the sequence A-E-I-D-G-I-E-L in cytotactin. ITGA9:ITGB1 may play a crucial role in SVEP1/polydom-mediated myoblast cell adhesion. Integrin ITGA9:ITGB1 represses PRKCA-mediated L-type voltage-gated channel Ca(2+) influx and ROCK-mediated calcium sensitivity in vascular smooth muscle cells via its interaction with SVEP1, thereby inhibiting vasocontraction. This chain is Integrin alpha-9, found in Mus musculus (Mouse).